Consider the following 418-residue polypeptide: Putative ion-transport protein YfeO (418 aa).

12 helical membrane-spanning segments follow: residues 10–30 (LLLSLPAVAIGIASSLILIVV), 54–74 (DSPLWIIGVLTLTGIAVGLVI), 99–119 (ALPGLIVALILGLAGGVSLGP), 120–140 (EHPIMTVNIALAVAIGARLLP), 149–169 (ILASAGTIGALFGTPVAAALI), 186–206 (LFAPLMAAAAGALTTGLFFHP), 223–243 (ILSGAIVAAIAIAAGMVAVWC), 258–278 (VLVLGIGGFILGILGVIGGPV), 300–320 (DYFLLAVIKLAALVVAAASGF), 322–342 (GGRIFPAVFVGVALGLMLHEH), 343–363 (VPAVPAAITVSCAILGIVLVV), and 371–391 (LFMAAVVVPNTTLLPLLCIVM).

It belongs to the chloride channel (TC 2.A.49) family.

Its subcellular location is the cell membrane. This is Putative ion-transport protein YfeO from Escherichia coli O139:H28 (strain E24377A / ETEC).